The chain runs to 443 residues: Squalene synthase (443 aa).

The next 2 membrane-spanning stretches (helical) occupy residues 291–311 and 423–443; these read TSFN…ELVF and ILLL…VRII.

The protein belongs to the phytoene/squalene synthase family. Mg(2+) serves as cofactor.

The protein localises to the endoplasmic reticulum membrane. The catalysed reaction is 2 (2E,6E)-farnesyl diphosphate + NADPH + H(+) = squalene + 2 diphosphate + NADP(+). It catalyses the reaction 2 (2E,6E)-farnesyl diphosphate + NADH + H(+) = squalene + 2 diphosphate + NAD(+). It participates in terpene metabolism; lanosterol biosynthesis; lanosterol from farnesyl diphosphate: step 1/3. Catalyzes the condensation of 2 two farnesyl pyrophosphate moieties to form squalene. It is the first committed enzyme of the sterol biosynthesis pathway. Required for the biosynthesis of ergosterol. The protein is Squalene synthase (ERG9) of Cyberlindnera jadinii (Torula yeast).